The chain runs to 93 residues: Early nodulin-12A (93 aa).

Positions 1–24 (MASFLLSILVFFLSALVLVPQGFA) are cleaved as a signal peptide. The interval 30 to 93 (PAYRPPQTEP…HPPSEDNIHF (64 aa)) is disordered. 10 repeat units span residues 34 to 38 (PPQTE), 39 to 43 (PPVHK), 44 to 48 (PPHKE), 49 to 53 (PPVHK), 54 to 58 (PPHKD), 59 to 63 (PPVNK), 64 to 68 (PPQKE), 69 to 73 (PPVHK), 74 to 78 (PPRKE), and 79 to 83 (PPTHR). A 10 X 5 AA tandem repeats of P-P-[HQVRT]-[HKNT]-[DEKR] region spans residues 34–83 (PPQTEPPVHKPPHKEPPVHKPPHKDPPVNKPPQKEPPVHKPPRKEPPTHR). Basic and acidic residues predominate over residues 46 to 93 (HKEPPVHKPPHKDPPVNKPPQKEPPVHKPPRKEPPTHRHPPSEDNIHF).

This sequence belongs to the plant proline-rich protein superfamily. ENOD12 family. More abundant in the young nodules than the mature nodules.

It is found in the secreted. The protein resides in the cell wall. Functionally, involved in the infection process during the plant-rhizobium interaction. The protein is Early nodulin-12A (ENOD12A) of Medicago sativa (Alfalfa).